The following is a 160-amino-acid chain: Protein-export protein SecB (160 aa).

It belongs to the SecB family. Homotetramer, a dimer of dimers. One homotetramer interacts with 1 SecA dimer.

It is found in the cytoplasm. In terms of biological role, one of the proteins required for the normal export of preproteins out of the cell cytoplasm. It is a molecular chaperone that binds to a subset of precursor proteins, maintaining them in a translocation-competent state. It also specifically binds to its receptor SecA. The polypeptide is Protein-export protein SecB (Rhizobium etli (strain ATCC 51251 / DSM 11541 / JCM 21823 / NBRC 15573 / CFN 42)).